We begin with the raw amino-acid sequence, 193 residues long: Bcl-2-binding component 3 (193 aa).

Disordered regions lie at residues 1–32 (MARA…RLMP) and 71–131 (ALGG…VEEE). At S10 the chain carries Phosphoserine. The BH3 motif lies at 137–151 (IGAQLRRMADDLNAQ).

The protein belongs to the Bcl-2 family. In terms of assembly, interacts with MCL1 and BCL2A1. Interacts (via BH3 domain) with BCL2 and BCL2L1/BCL-XL. Interacts (via BH3 domain) with NOL3/ARC (via CARD domain); this interaction prevents BBC3 association with BCL2 and results in CASP8 activation.

It localises to the mitochondrion. Its function is as follows. Essential mediator of p53/TP53-dependent and p53/TP53-independent apoptosis. Promotes partial unfolding of BCL2L1 and dissociation of BCL2L1 from p53/TP53, releasing the bound p53/TP53 to induce apoptosis. Regulates ER stress-induced neuronal apoptosis. The protein is Bcl-2-binding component 3 (Bbc3) of Rattus norvegicus (Rat).